We begin with the raw amino-acid sequence, 135 residues long: Interleukin-4 (135 aa).

The signal sequence occupies residues 1–24 (MGLTYQLIPVLVCLLVCTSHFVHG). 3 disulfide bridges follow: cysteine 27/cysteine 135, cysteine 48/cysteine 85, and cysteine 70/cysteine 105. N-linked (GlcNAc...) asparagine glycosylation is present at asparagine 62.

This sequence belongs to the IL-4/IL-13 family.

It localises to the secreted. Functionally, participates in at least several B-cell activation processes as well as of other cell types. It is a costimulator of DNA-synthesis. It induces the expression of class II MHC molecules on resting B-cells. It enhances both secretion and cell surface expression of IgE and IgG1. It also regulates the expression of the low affinity Fc receptor for IgE (CD23) on both lymphocytes and monocytes. Positively regulates IL31RA expression in macrophages. Stimulates autophagy in dendritic cells by interfering with mTORC1 signaling and through the induction of RUFY4. The protein is Interleukin-4 (IL4) of Bubalus carabanensis (Swamp type water buffalo).